The chain runs to 372 residues: SVSAFFVGSMTHSVNPGGENWIWESQLEVREEWPTITNNQGTKIYIAPRQYLLQLRCKQTPSRSEISEKISQIKPLITSTHNYTAAPEPLNSLNSHFQLLEQEAGKYLYVNLTNISSQIIRKKIFNHILDVFEDSYSPKKLWIITGHRQAQPKCYETTSKDAVLKALLTAQAKITEMELMGRASPPWIYKATVLLTHMAMNRQQAVRPERYEQQPRQNQVNQKNIKAAIINKIYKNKAVPPPSPTDTISSTESWMEEVNQIEKQHTTHSSSTKITAKRTGDISPQQGPSKRRALSPLITETTSTSSSHHQTQEETAQESEPESPSFLVQQAQEMQKRLSLFPKLNFSGTTFSIASVTVSKQSISMEIKSNNN.

The segment at 259–326 (NQIEKQHTTH…QESEPESPSF (68 aa)) is disordered. The span at 299 to 309 (TETTSTSSSHH) shows a compositional bias: low complexity.

The chain is Non-structural protein NS2 (NS) from Aedes albopictus (Asian tiger mosquito).